A 144-amino-acid chain; its full sequence is Large ribosomal subunit protein uL16 (144 aa).

The protein belongs to the universal ribosomal protein uL16 family. Part of the 50S ribosomal subunit.

In terms of biological role, binds 23S rRNA and is also seen to make contacts with the A and possibly P site tRNAs. The chain is Large ribosomal subunit protein uL16 from Bacillus subtilis (strain 168).